The chain runs to 4885 residues: Centrosome-associated protein CEP530 (4885 aa).

Residues 1437–1528 (VAEYEAETRG…GREKDQLRSE (92 aa)) are a coiled coil.

The protein resides in the cytoplasm. Its subcellular location is the cytoskeleton. It is found in the microtubule organizing center. The protein localises to the centrosome. In terms of biological role, required for proper nuclei segregation during the cell division. Plays a role in coordination of karyokinesis and cytokinesis during the tachyzoite cell cycle. The chain is Centrosome-associated protein CEP530 from Toxoplasma gondii (strain ATCC 50611 / Me49).